Consider the following 136-residue polypeptide: Small ribosomal subunit protein uS9 (136 aa).

The interval 111-136 is disordered; the sequence is DARRTEPHKPSRSTKGPRAKRQKSYR. The segment covering 120-136 has biased composition (basic residues); it reads PSRSTKGPRAKRQKSYR.

The protein belongs to the universal ribosomal protein uS9 family.

The chain is Small ribosomal subunit protein uS9 (rps9) from Methanocaldococcus jannaschii (strain ATCC 43067 / DSM 2661 / JAL-1 / JCM 10045 / NBRC 100440) (Methanococcus jannaschii).